A 180-amino-acid chain; its full sequence is Large ribosomal subunit protein uL5 (180 aa).

The protein belongs to the universal ribosomal protein uL5 family. In terms of assembly, part of the 50S ribosomal subunit; part of the 5S rRNA/L5/L18/L25 subcomplex. Contacts the 5S rRNA and the P site tRNA. Forms a bridge to the 30S subunit in the 70S ribosome.

This is one of the proteins that bind and probably mediate the attachment of the 5S RNA into the large ribosomal subunit, where it forms part of the central protuberance. In the 70S ribosome it contacts protein S13 of the 30S subunit (bridge B1b), connecting the 2 subunits; this bridge is implicated in subunit movement. Contacts the P site tRNA; the 5S rRNA and some of its associated proteins might help stabilize positioning of ribosome-bound tRNAs. This chain is Large ribosomal subunit protein uL5, found in Streptococcus agalactiae serotype Ia (strain ATCC 27591 / A909 / CDC SS700).